The following is a 239-amino-acid chain: MARGCLCCLKYMMFLFNLIFWLCGCGLLGVGIWLSVSQGNFATFSPSFPSLSAANLVIAIGTIVMVTGFLGCLGAIKENRCLLLSFFIVLLIILLAELILIILFFVYMDKVNENARKDLKEGLLLYNSENNVGLKNAWNIIQAEMHCCGVTDYTDWYPVLGENTVPDRCCMENSQGCGRNSTTPLWKTGCYEKVKMWFDDNKHVLGTVGMCILIMQILGMAFSMTLFQHIHRTGKKYDA.

At 1–13 (MARGCLCCLKYMM) the chain is on the cytoplasmic side. The helical transmembrane segment at 14–34 (FLFNLIFWLCGCGLLGVGIWL) threads the bilayer. At 35–55 (SVSQGNFATFSPSFPSLSAAN) the chain is on the extracellular side. The helical transmembrane segment at 56–76 (LVIAIGTIVMVTGFLGCLGAI) threads the bilayer. Residues 77–85 (KENRCLLLS) lie on the Cytoplasmic side of the membrane. Residues 86 to 106 (FFIVLLIILLAELILIILFFV) traverse the membrane as a helical segment. Residues 107–203 (YMDKVNENAR…VKMWFDDNKH (97 aa)) are Extracellular-facing. Residue asparagine 180 is glycosylated (N-linked (GlcNAc...) asparagine). A helical membrane pass occupies residues 204-224 (VLGTVGMCILIMQILGMAFSM). The Cytoplasmic portion of the chain corresponds to 225 to 239 (TLFQHIHRTGKKYDA).

The protein belongs to the tetraspanin (TM4SF) family. Found in a complex with GP6. Post-translationally, glycosylated.

The protein resides in the membrane. The protein is Tetraspanin-9 (TSPAN9) of Sus scrofa (Pig).